We begin with the raw amino-acid sequence, 1887 residues long: MSLFFKSIKSKIEETLNHTPQVNLFNNSNNGGNNSNNGGNNSTPTLTKTPSTTNFPYNDYKNYTYKYVYDNTDNYNFNNNNNNNNNNNNNNNNNTKENNFKSIRESASIYKNNEEINNDDNNTIINKKKIEEEEDETNFDTSLIPKLGHEDKDELESDHYITIWGNGIRNYKNCNMSSIGFSEMYNQQKIVLISTGAIHSSFITDQGNLYTFGDGLLGKLGHGNLESYSSPKLVEFFQTKPSLRVVSIANGGKHSLALTICGKVYSWGGNDSCQLGLGNGSSSSYYSLPQLINFNISYNNNNNNNNNNSTNNNNNNNNDGAQQQFSLSQNSSSNNNKIKIVKLSCGTNRSAVITDKGLLFTFGRGDHGRLGLGEQSLLMQSTPKLVQSLQGHFIIDMSSGGGHSLVLTNKGLVFSFGRNDQGQLGIGCFSNQQTIPKQIQWFQTSQQQQQQPINIIKVSAGGYHSIAISDNNDTYAWGRSDYGVLGTSIDVQGDRNLPVLINSNSVVVDNVKFIDVSSGFQHNVAMSIDGSLYSWGCNAGQRLGFKSDENQLTPKKCFINSKDSKPLLFTCGEIITIIVEKRFKEPIIKTELQLPSSTQSQQQTELSLPSSVNSSSDSNFNKSIIDNSSTTTIIKQTNNNIKSTTTTIITRPSSPTPSFLSLANEGKDLLNSTQSNFIEWMTLISKSKGLLNLIQMKATSSLPNLGLSIEKKNKDFDDINRQLKLLVNSNLSLSPLPDNIQSEIDRLVLSRNQLGLGLVSEYQTSIDYWLEIKQQKDLTFLNLSKLLNLSTITTTTTSNTTTTTTATTTTTTTTTTNLINKKVLVHQDEKQQQREKSETELEEEQDEEEEDSEIKNGTLTAIEIQQQSFYLVERLNQGLGNFCNNIMDSTTMVQPLTTATASSTTATATATTTTANTTNSSGIINKNFGESLRLSMEEIQLIVLETQKYAIKYHSLLSQQLQQCDDLINIHRGKLVEVQDFLNKSKLAQSLLEQREKLKSDYRFCKRNSIELSKKIEVIELDYDQNLCDDDDNNHENNSVNNNSNNNNNNNNNNNNNNNNNNNNNNNIDNNINSNSINDSSNNNNNNNNIEKLKNELIKLKKDEQKLLSNQQEINELIIEILDKYVPEFKIKLRANDKISSRIKDTGLLVTDRKFQHYDIIKTLSTHPHNVYLANFNDQLVVLKEFGIGDAFGKQIFERQVSLLKQMNHKCIMPIQAVFYDRNAFMQMEYISGGNLLDWCRNNNNDNENNKRRQPWEIQKIFQQIIQAIAYMHSNCIIHRDLKLENVLIRQDGTPVISDFDLSKDISANVNVTVFNINGGTELYKAPEMKEQNVKGSYSTDIWAFGVMLYKCIFQFVNNNNNGNNGKNNNSDGNENDNNNNNNFLIIREPFLLPEENNLPLPANHSDQRLISLLSSIFQRNPKLRPTAHQIAVHPYFVTSLVEDLLSSRTLIDCREKIAAFRAHISSLSEMAEEMSESLQLTVRREHLVLDFFQFFFKKIESNKLFCRLEVSFQGEKGLDLGGLSSEMYSLLFSDNQIIDNSNNSNNSVSYSIPKNSLFSKKFNLFENSGTESPFYLLNSNDLFNNNNNNNEENNNNNNNNNNNNNNNNNNNNNNNNNNNNNNNNNEENPLLILKNEFTIFKILGKIFLKSIIDGKPIPDCFPTSFFKYLLGVKVNLRDLEIYDPQLAQSFKKVLVLDNIEEYLSTTFEGLIEGGESIPVTDLNKEEFIQRNIERVLVGCRQSKLEAFKSGFMSIDSLNAHFALFSPTELQLLMCGNTLVDSSVLQKNFKFIGFPDTSSTPKDFRRAVDEMNQDEIRLFLRFVTGMVALPLSGFEKSISIIQVPLSQKLPCAHTCSYQLDLPDYNDFDTTKKKLIKMLEYVDGFAFI.

Disordered stretches follow at residues 19 to 55 (TPQV…TTNF) and 72 to 98 (TDNY…TKEN). 2 stretches are compositionally biased toward low complexity: residues 26-54 (NNSN…STTN) and 72-97 (TDNY…NTKE). RCC1 repeat units lie at residues 206–260 (QGNL…ALTI), 262–314 (GKVY…NNNN), 356–409 (KGLL…VLTN), 411–470 (GLVF…AISD), 472–528 (NDTY…AMSI), and 529–581 (DGSL…IVEK). Residues 299–333 (NNNNNNNNNNSTNNNNNNNNDGAQQQFSLSQNSSS) form a disordered region. Disordered stretches follow at residues 594-619 (LPSS…SDSN), 823-858 (VLVH…KNGT), and 1030-1088 (DDDN…NNNN). The segment covering 825–839 (VHQDEKQQQREKSET) has biased composition (basic and acidic residues). The span at 840 to 852 (ELEEEQDEEEEDS) shows a compositional bias: acidic residues. A compositionally biased stretch (low complexity) spans 1036–1088 (ENNSVNNNSNNNNNNNNNNNNNNNNNNNNNNNIDNNINSNSINDSSNNNNNNN). In terms of domain architecture, Protein kinase spans 1158-1437 (YDIIKTLSTH…AHQIAVHPYF (280 aa)). ATP-binding positions include 1164–1172 (LSTHPHNVY) and K1184. The active-site Proton acceptor is the D1281. The region spanning 1501 to 1887 (ESNKLFCRLE…LEYVDGFAFI (387 aa)) is the HECT domain. Residues 1586–1628 (NNNNNNEENNNNNNNNNNNNNNNNNNNNNNNNNNNNNNNNNEE) are disordered. The active-site Glycyl thioester intermediate is C1855.

In the N-terminal section; belongs to the protein kinase superfamily. Ser/Thr protein kinase family. The protein in the C-terminal section; belongs to the protein kinase superfamily. CAMK Ser/Thr protein kinase family.

The enzyme catalyses L-seryl-[protein] + ATP = O-phospho-L-seryl-[protein] + ADP + H(+). It carries out the reaction L-threonyl-[protein] + ATP = O-phospho-L-threonyl-[protein] + ADP + H(+). The catalysed reaction is S-ubiquitinyl-[E2 ubiquitin-conjugating enzyme]-L-cysteine + [acceptor protein]-L-lysine = [E2 ubiquitin-conjugating enzyme]-L-cysteine + N(6)-ubiquitinyl-[acceptor protein]-L-lysine.. The protein operates within protein modification; protein ubiquitination. The protein is Bifunctional serine/threonine-protein kinase/NEDD4-like E3 ubiquitin-protein ligase of Dictyostelium discoideum (Social amoeba).